Reading from the N-terminus, the 194-residue chain is dCTP deaminase (194 aa).

Residues 110–115 (RSSLAR), Asp-128, 136–138 (VLE), Tyr-171, Lys-178, and Gln-182 each bind dCTP. Glu-138 functions as the Proton donor/acceptor in the catalytic mechanism.

It belongs to the dCTP deaminase family. As to quaternary structure, homotrimer.

It catalyses the reaction dCTP + H2O + H(+) = dUTP + NH4(+). The protein operates within pyrimidine metabolism; dUMP biosynthesis; dUMP from dCTP (dUTP route): step 1/2. Catalyzes the deamination of dCTP to dUTP. The polypeptide is dCTP deaminase (Pasteurella multocida (strain Pm70)).